Consider the following 1764-residue polypeptide: Nucleolar pre-ribosomal-associated protein 1 (1764 aa).

A disordered region spans residues 1–23 (MSNHSEAYGSRDQRREKYTQGKE). A compositionally biased stretch (basic and acidic residues) spans 9–23 (GSRDQRREKYTQGKE).

As to quaternary structure, associates with pre-60S ribosomal particles. Predominantly associated with the 27SA2 pre-rRNA. Can associate with a subset of box H/ACA and box C/D small nucleolar RNPs (snoRNPs) required for peptidyl transferase center modification and with small RNAs snR37 and snR42. Interacts with URB2. Together with DBP6, NOP8, URB2 and RSA3, forms an RNA-independent complex, which is required during early maturation of nascent 60S ribosomal subunits.

It localises to the nucleus. Its subcellular location is the nucleolus. Functionally, required for 60S ribosomal subunit formation and pre-rRNA processing. Required for normal accumulation of 25S and 5.8S rRNAs. The chain is Nucleolar pre-ribosomal-associated protein 1 (URB1) from Saccharomyces cerevisiae (strain ATCC 204508 / S288c) (Baker's yeast).